The chain runs to 537 residues: Zinc finger protein 835 (537 aa).

The segment at 12-109 (AELEGNWKHE…RERGGGPKKP (98 aa)) is disordered. Polar residues predominate over residues 63–77 (TISSPAATQASVPDD). The span at 89–104 (SPKERHPDSRQRERGG) shows a compositional bias: basic and acidic residues. 14 consecutive C2H2-type zinc fingers follow at residues 110–132 (WKCG…QRIH), 138–160 (FACP…QRTH), 166–188 (YACH…WRTH), 194–216 (HRCA…RRVH), 222–244 (YACA…QRIH), 250–272 (YECS…QRIH), 278–300 (YRCG…RRVH), 306–328 (YTCQ…RRIH), 334–356 (YACG…QRTH), 362–384 (YPCH…RLVH), 390–412 (YRCL…QKIH), 418–440 (YKCG…QRTH), 446–468 (YTCP…HIVH), and 474–496 (YECS…QRTH). Residues 497-537 (ADSSGRLCPAPTPDSTPGLSQGGETCQQGCPGRNPRGPAED) form a disordered region. Positions 509–524 (PDSTPGLSQGGETCQQ) are enriched in polar residues.

Belongs to the krueppel C2H2-type zinc-finger protein family.

Its subcellular location is the nucleus. Its function is as follows. May be involved in transcriptional regulation. The protein is Zinc finger protein 835 (ZNF835) of Homo sapiens (Human).